Here is a 640-residue protein sequence, read N- to C-terminus: Probable Ufm1-specific protease (640 aa).

Catalysis depends on residues Cys467, Asp591, and His593.

It belongs to the peptidase C78 family.

In terms of biological role, thiol protease which recognizes and hydrolyzes the peptide bond at the C-terminal Gly of ufm-1, a ubiquitin-like modifier protein bound to a number of target proteins. This chain is Probable Ufm1-specific protease, found in Oryza sativa subsp. japonica (Rice).